Reading from the N-terminus, the 418-residue chain is Serine protease inhibitor A3N (418 aa).

An N-terminal signal peptide occupies residues 1 to 29 (MTRLVTLELLMAGIGSALLCFPDCILGED). Residue S93 is modified to Phosphoserine. N-linked (GlcNAc...) asparagine glycans are attached at residues N104, N258, and N269. Residues 367-394 (GTEAAAATGVKFVPMSAKLDPLIIAFDR) form an RCL region.

Belongs to the serpin family. N-glycosylated. In terms of tissue distribution, liver.

It is found in the secreted. The protein is Serine protease inhibitor A3N (Serpina3n) of Rattus norvegicus (Rat).